The chain runs to 211 residues: Large ribosomal subunit protein uL4 (211 aa).

The tract at residues 63–94 (RFGRQKGGGTARHGARSAPQFVGGGKAHGPRV) is disordered.

It belongs to the universal ribosomal protein uL4 family. Part of the 50S ribosomal subunit.

Functionally, one of the primary rRNA binding proteins, this protein initially binds near the 5'-end of the 23S rRNA. It is important during the early stages of 50S assembly. It makes multiple contacts with different domains of the 23S rRNA in the assembled 50S subunit and ribosome. Its function is as follows. Forms part of the polypeptide exit tunnel. In Maricaulis maris (strain MCS10) (Caulobacter maris), this protein is Large ribosomal subunit protein uL4.